The chain runs to 245 residues: Fibroblast growth factor 13 (245 aa).

Disordered stretches follow at residues 1–37 and 213–245; these read MAAAIASSLIRQKRQAREREKSNACKCVSSPSKSKGN and TEFSRSGSGTPTKSRSVSGVLNGGKSMSQNDST. Positions 1–62 are mediates targeting to the nucleus; that stretch reads MAAAIASSLI…GSKKRRRRRP (62 aa). The segment covering 215–245 has biased composition (polar residues); that stretch reads FSRSGSGTPTKSRSVSGVLNGGKSMSQNDST.

This sequence belongs to the heparin-binding growth factors family.

It is found in the cell projection. The protein resides in the filopodium. It localises to the growth cone. The protein localises to the dendrite. Its subcellular location is the cell membrane. It is found in the sarcolemma. The protein resides in the cytoplasm. Microtubule-binding protein which directly binds tubulin and is involved in both polymerization and stabilization of microtubules. Through its action on microtubules, may participate in the refinement of axons by negatively regulating axonal and leading processes branching. Plays a crucial role in neuron polarization and migration. Regulates voltage-gated sodium channel transport and function. Required for proper head development, it is involved in neural differentiation through regulation of the mek5-erk5 pathway. The chain is Fibroblast growth factor 13 (fgf13) from Xenopus laevis (African clawed frog).